The sequence spans 542 residues: Carbamoyl phosphate synthase large chain, C-terminal section (542 aa).

Residues 1–389 (MSDKVLVIGA…WKAQLAAGHE (389 aa)) are carbamoyl phosphate synthetic domain. Positions 122–316 (SKLLKKLGIP…LAKIGTKAIL (195 aa)) constitute an ATP-grasp domain. ATP contacts are provided by R158, R197, I199, E204, G230, V231, H232, S233, Q273, and E287. The Mg(2+) site is built by Q273, E287, and N289. Residues Q273, E287, and N289 each contribute to the Mn(2+) site. The 155-residue stretch at 388–542 (HELPLEGTAV…KPEELTRYGG (155 aa)) folds into the MGS-like domain. The tract at residues 390–542 (LPLEGTAVIS…KPEELTRYGG (153 aa)) is allosteric domain.

It belongs to the CarB family. As to quaternary structure, composed of two chains; the small (or glutamine) chain promotes the hydrolysis of glutamine to ammonia, which is used by the large (or ammonia) chain to synthesize carbamoyl phosphate. Tetramer of heterodimers (alpha,beta)4. The cofactor is Mg(2+). Requires Mn(2+) as cofactor.

The catalysed reaction is hydrogencarbonate + L-glutamine + 2 ATP + H2O = carbamoyl phosphate + L-glutamate + 2 ADP + phosphate + 2 H(+). It catalyses the reaction hydrogencarbonate + NH4(+) + 2 ATP = carbamoyl phosphate + 2 ADP + phosphate + 2 H(+). Its pathway is amino-acid biosynthesis; L-arginine biosynthesis; carbamoyl phosphate from bicarbonate: step 1/1. It functions in the pathway pyrimidine metabolism; UMP biosynthesis via de novo pathway; (S)-dihydroorotate from bicarbonate: step 1/3. Large subunit of the glutamine-dependent carbamoyl phosphate synthetase (CPSase). CPSase catalyzes the formation of carbamoyl phosphate from the ammonia moiety of glutamine, carbonate, and phosphate donated by ATP, constituting the first step of 2 biosynthetic pathways, one leading to arginine and/or urea and the other to pyrimidine nucleotides. The large subunit (synthetase) binds the substrates ammonia (free or transferred from glutamine from the small subunit), hydrogencarbonate and ATP and carries out an ATP-coupled ligase reaction, activating hydrogencarbonate by forming carboxy phosphate which reacts with ammonia to form carbamoyl phosphate. This chain is Carbamoyl phosphate synthase large chain, C-terminal section (carB2), found in Methanopyrus kandleri (strain AV19 / DSM 6324 / JCM 9639 / NBRC 100938).